The chain runs to 94 residues: Large ribosomal subunit protein eL43A (94 aa).

Residues 39–62 form a C4-type zinc finger; that stretch reads CPFCGRNTVKRTAAGIWCCNGKGC.

Belongs to the eukaryotic ribosomal protein eL43 family. In terms of assembly, component of the large ribosomal subunit (LSU). Mature yeast ribosomes consist of a small (40S) and a large (60S) subunit. The 40S small subunit contains 1 molecule of ribosomal RNA (18S rRNA) and at least 33 different proteins. The large 60S subunit contains 3 rRNA molecules (25S, 5.8S and 5S rRNA) and at least 46 different proteins.

It is found in the cytoplasm. Functionally, component of the ribosome, a large ribonucleoprotein complex responsible for the synthesis of proteins in the cell. The small ribosomal subunit (SSU) binds messenger RNAs (mRNAs) and translates the encoded message by selecting cognate aminoacyl-transfer RNA (tRNA) molecules. The large subunit (LSU) contains the ribosomal catalytic site termed the peptidyl transferase center (PTC), which catalyzes the formation of peptide bonds, thereby polymerizing the amino acids delivered by tRNAs into a polypeptide chain. The nascent polypeptides leave the ribosome through a tunnel in the LSU and interact with protein factors that function in enzymatic processing, targeting, and the membrane insertion of nascent chains at the exit of the ribosomal tunnel. The chain is Large ribosomal subunit protein eL43A (rpl4301) from Schizosaccharomyces pombe (strain 972 / ATCC 24843) (Fission yeast).